The sequence spans 661 residues: Methyl-accepting chemotaxis protein McpA (661 aa).

At 1–16 (MKKILQLIKQRSITRK) the chain is on the cytoplasmic side. A helical membrane pass occupies residues 17–37 (LLVSFLSILIIPVVILAIFAY). Residues 38–281 (QSASSSLDRQ…IHEAAQPVLH (244 aa)) lie on the Extracellular side of the membrane. A Cache domain is found at 152–228 (ITDPYKTAST…QSGTELKGDW (77 aa)). The helical transmembrane segment at 282–302 (LALIVLAAAIIIGIIVMTLII) threads the bilayer. In terms of domain architecture, HAMP spans 303 to 355 (RSITTPLKQLVGSSKRISEGDLTETIDIRSKDELGELGKSFNNMASSLRSLIH). The Cytoplasmic portion of the chain corresponds to 303 to 661 (RSITTPLKQL…RDMTKRFKIE (359 aa)). Residue Glu-370 is modified to Glutamate methyl ester (Glu). The Methyl-accepting transducer domain maps to 374–610 (SAAQTSKATE…EVSGASEHIA (237 aa)). Deamidated glutamine occurs at positions 593 and 594. The residue at position 594 (Gln-594) is a Glutamate methyl ester (Gln). A glutamate methyl ester (Glu) mark is found at Glu-629 and Glu-636.

This sequence belongs to the methyl-accepting chemotaxis (MCP) protein family. Interacts with FloT. Post-translationally, deamidated by CheD on Gln-593 and Gln-594, producing glutamate residues. The glutamate residues are then methylated. Other additional sites are deamidated and methylated as well.

The protein localises to the cell membrane. The protein resides in the membrane raft. Chemotactic-signal transducers respond to changes in the concentration of attractants and repellents in the environment, transduce a signal from the outside to the inside of the cell, and facilitate sensory adaptation through the variation of the level of methylation. All amino acids serve as attractants in B.subtilis, they appear to cause an increase in the turnover methyl groups, leading to methylation of an unidentified acceptor, while repellents have been shown to cause a decrease in methyl group turnover. The methyl groups are added by a methyltransferase and removed by a methylesterase. McpA is required for taxis towards glucose and alpha-methylglucoside. This is Methyl-accepting chemotaxis protein McpA (mcpA) from Bacillus subtilis (strain 168).